Consider the following 111-residue polypeptide: Large ribosomal subunit protein uL22 (111 aa).

The protein belongs to the universal ribosomal protein uL22 family. As to quaternary structure, part of the 50S ribosomal subunit.

Its function is as follows. This protein binds specifically to 23S rRNA; its binding is stimulated by other ribosomal proteins, e.g. L4, L17, and L20. It is important during the early stages of 50S assembly. It makes multiple contacts with different domains of the 23S rRNA in the assembled 50S subunit and ribosome. In terms of biological role, the globular domain of the protein is located near the polypeptide exit tunnel on the outside of the subunit, while an extended beta-hairpin is found that lines the wall of the exit tunnel in the center of the 70S ribosome. The chain is Large ribosomal subunit protein uL22 from Geobacter sulfurreducens (strain ATCC 51573 / DSM 12127 / PCA).